The sequence spans 91 residues: Cytochrome c-554(547) (91 aa).

Residues Cys-15, Cys-18, His-19, and Met-64 each coordinate heme c.

Monomer. Binds 1 heme c group covalently per subunit.

The protein is Cytochrome c-554(547) of Halothiobacillus neapolitanus (Thiobacillus neapolitanus).